We begin with the raw amino-acid sequence, 424 residues long: Elongation factor 1-alpha (424 aa).

Residues 5–223 (KPHLNLITIG…DAFKVPEKPI (219 aa)) form the tr-type G domain. Residues 14–21 (GHVDHGKS) are G1. GTP is bound at residue 14–21 (GHVDHGKS). Ser21 contributes to the Mg(2+) binding site. A G2 region spans residues 70 to 74 (GVTID). The G3 stretch occupies residues 91-94 (DAPG). Residues 91-95 (DAPGH) and 148-151 (NKMD) each bind GTP. The tract at residues 148–151 (NKMD) is G4. The tract at residues 187 to 189 (SGY) is G5.

This sequence belongs to the TRAFAC class translation factor GTPase superfamily. Classic translation factor GTPase family. EF-Tu/EF-1A subfamily.

It localises to the cytoplasm. It catalyses the reaction GTP + H2O = GDP + phosphate + H(+). GTP hydrolase that promotes the GTP-dependent binding of aminoacyl-tRNA to the A-site of ribosomes during protein biosynthesis. The protein is Elongation factor 1-alpha of Thermoplasma acidophilum (strain ATCC 25905 / DSM 1728 / JCM 9062 / NBRC 15155 / AMRC-C165).